The following is a 273-amino-acid chain: 4-hydroxy-tetrahydrodipicolinate reductase (273 aa).

NAD(+) contacts are provided by residues Gly-12–Met-17 and Glu-38. Arg-39 serves as a coordination point for NADP(+). NAD(+) is bound by residues Gly-102–Thr-104 and Ala-126–Phe-129. Residue His-159 is the Proton donor/acceptor of the active site. Position 160 (His-160) interacts with (S)-2,3,4,5-tetrahydrodipicolinate. The active-site Proton donor is Lys-163. Gly-169 to Thr-170 contributes to the (S)-2,3,4,5-tetrahydrodipicolinate binding site.

Belongs to the DapB family. Homotetramer.

It localises to the cytoplasm. The catalysed reaction is (S)-2,3,4,5-tetrahydrodipicolinate + NAD(+) + H2O = (2S,4S)-4-hydroxy-2,3,4,5-tetrahydrodipicolinate + NADH + H(+). The enzyme catalyses (S)-2,3,4,5-tetrahydrodipicolinate + NADP(+) + H2O = (2S,4S)-4-hydroxy-2,3,4,5-tetrahydrodipicolinate + NADPH + H(+). It participates in amino-acid biosynthesis; L-lysine biosynthesis via DAP pathway; (S)-tetrahydrodipicolinate from L-aspartate: step 4/4. Functionally, catalyzes the conversion of 4-hydroxy-tetrahydrodipicolinate (HTPA) to tetrahydrodipicolinate. The polypeptide is 4-hydroxy-tetrahydrodipicolinate reductase (Photorhabdus laumondii subsp. laumondii (strain DSM 15139 / CIP 105565 / TT01) (Photorhabdus luminescens subsp. laumondii)).